The sequence spans 771 residues: Nitrogen regulation protein NtrY (771 aa).

4 helical membrane-spanning segments follow: residues F22–G46, V56–G76, I99–L122, and V295–F319. The HAMP domain occupies K321–E374. In terms of domain architecture, PAS spans R386 to N458. A Histidine kinase domain is found at R511–G728. Position 514 is a phosphohistidine; by autocatalysis (H514). Positions E727–T771 are disordered. Residues A740 to A763 show a composition bias toward low complexity.

It localises to the cell membrane. The catalysed reaction is ATP + protein L-histidine = ADP + protein N-phospho-L-histidine.. In terms of biological role, member of the two-component regulatory system NtrY/NtrX involved in nitrogen level control. Probably activates NtrX by phosphorylation. The protein is Nitrogen regulation protein NtrY (ntrY) of Azorhizobium caulinodans (strain ATCC 43989 / DSM 5975 / JCM 20966 / LMG 6465 / NBRC 14845 / NCIMB 13405 / ORS 571).